The primary structure comprises 1378 residues: Disease resistance protein RRS1 (1378 aa).

The 142-residue stretch at Glu-5–His-146 folds into the TIR domain. Residues Ile-170–His-421 form the NB-ARC domain. An ATP-binding site is contributed by Gly-179–Thr-186. LRR repeat units follow at residues Ser-498 to Asn-522, Asn-535 to Pro-553, Asn-554 to Pro-575, His-577 to Leu-598, Ala-621 to Arg-646, Pro-665 to Pro-688, Leu-742 to Gly-766, Pro-768 to Ile-793, and Pro-831 to Leu-854. The Nuclear localization signal signature appears at Arg-988 to Asp-1005. The segment at residues Ile-1204–Pro-1272 is a DNA-binding region (WRKY). The disordered stretch occupies residues Arg-1300–Arg-1321.

In terms of assembly, interacts with PopP2, a R.solanacearum type III effector.

It localises to the nucleus. Its subcellular location is the cytoplasm. Its function is as follows. Transcription factor. Interacts specifically with the W box (5'-(T)TGAC[CT]-3'), a frequently occurring elicitor-responsive cis-acting element. Also acts as a disease resistance protein involved in resistance to fungal and bacterial pathogens, including R.solanacearum, P.syringae pv. tomato and C.higginsianum. RRS1 mediated resistance depends on salicylic acid and NDR1 (AC O48915). In Arabidopsis thaliana (Mouse-ear cress), this protein is Disease resistance protein RRS1.